The sequence spans 179 residues: tRNA (cytidine(56)-2'-O)-methyltransferase (179 aa).

Residues Leu-82, 112–116, and 130–137 each bind S-adenosyl-L-methionine; these read GAEKV and VGNQPHSE.

The protein belongs to the aTrm56 family. In terms of assembly, homodimer.

It is found in the cytoplasm. It carries out the reaction cytidine(56) in tRNA + S-adenosyl-L-methionine = 2'-O-methylcytidine(56) in tRNA + S-adenosyl-L-homocysteine + H(+). In terms of biological role, specifically catalyzes the AdoMet-dependent 2'-O-ribose methylation of cytidine at position 56 in tRNAs. The protein is tRNA (cytidine(56)-2'-O)-methyltransferase of Methanococcus maripaludis (strain C7 / ATCC BAA-1331).